Reading from the N-terminus, the 247-residue chain is MMFNKQIFTILILSLSLALAGSGCISEGAEDNVAQEITVDEFSNIRENPVTPWNPEPSAPVIDPTAYIDPQASVIGEVTIGANVMVSPMASIRSDEGMPIFVGDRSNVQDGVVLHALETINEEGEPIEDNIVEVDGKEYAVYIGNNVSLAHQSQVHGPAAVGDDTFIGMQAFVFKSKVGNNCVLEPRSAAIGVTIPDGRYIPAGMVVTSQAEADKLPEVTDDYAYSHTNEAVVYVNVHLAEGYKETS.

A signal peptide spans 1–34 (MMFNKQIFTILILSLSLALAGSGCISEGAEDNVA). Residue 93–95 (RSD) participates in substrate binding. Glu-96 functions as the Proton donor/acceptor in the catalytic mechanism. 109-110 (QD) contributes to the substrate binding site. His-115 contacts Zn(2+). Residue Glu-118 is part of the active site. Residues His-151 and His-156 each contribute to the Zn(2+) site. Asn-236 is a substrate binding site.

This sequence belongs to the gamma-class carbonic anhydrase family. In terms of assembly, homotrimer. Requires Zn(2+) as cofactor.

It localises to the secreted. The enzyme catalyses hydrogencarbonate + H(+) = CO2 + H2O. Its function is as follows. Reversible hydration of carbon dioxide. Important for growth on acetate. As a probably extracellular enzyme, it may support a H(+)/CH(3)COO(-) symport mechanism and/or conversion of CO(2) to HCO(3)(-), removing excess CO(2) produced by growth on acetate. This is Carbonic anhydrase from Methanosarcina thermophila (strain ATCC 43570 / DSM 1825 / OCM 12 / VKM B-1830 / TM-1).